We begin with the raw amino-acid sequence, 94 residues long: MNIKPFGDRVVIKKVEAEEKTASGIVLPGAAKEQPQIAEVVEVGPGGIVEGKEIKMELTVGDKVIFQKYSGTEVKIEGQEYTILRQSDVLAVIE.

Belongs to the GroES chaperonin family. Heptamer of 7 subunits arranged in a ring. Interacts with the chaperonin GroEL.

The protein resides in the cytoplasm. Together with the chaperonin GroEL, plays an essential role in assisting protein folding. The GroEL-GroES system forms a nano-cage that allows encapsulation of the non-native substrate proteins and provides a physical environment optimized to promote and accelerate protein folding. GroES binds to the apical surface of the GroEL ring, thereby capping the opening of the GroEL channel. The chain is Co-chaperonin GroES from Clostridioides difficile (Peptoclostridium difficile).